A 201-amino-acid chain; its full sequence is MYB-like transcription factor EOBI (201 aa).

HTH myb-type domains are found at residues 10–62 (DVEV…LNYL) and 63–117 (RPDV…QKHI). 2 DNA-binding regions (H-T-H motif) span residues 38 to 62 (WNSLARSAGLKRTGKSCRLRWLNYL) and 90 to 113 (WSKIAKHLPGRTDNEIKNYWRTRI). Positions 121-170 (DQNMKKPSKCEQNDQKAISTSQASTGPTDTIDSYSPSSYTENTNNNMENI) are disordered. Polar residues predominate over residues 135–159 (QKAISTSQASTGPTDTIDSYSPSSY). Over residues 160–169 (TENTNNNMEN) the composition is skewed to low complexity.

In terms of tissue distribution, expressed exclusively in flower organs. Accumulates mostly in flower limbs, to a lower extent in pistils and flower tubes, and, at low levels, in stamens.

The protein localises to the nucleus. Its function is as follows. MYB-type transcription factor controlling the production of volatile organic compounds (VOCs), including floral volatile benzenoids and phenylpropanoids (FVBP), in flowers of fragrant cultivars (e.g. cv. Mitchell and cv. V26) by regulating the expression of ODO1, a key regulator of the shikimate pathway, and of several biosynthetic floral scent-related genes (e.g. IGS, EGS, BSMT1, BSMT2, PAL1, PAL2, EPSPS, DAHPS, CS, CM1, ADT1 and PPA-AT). Binds to and activates the promoters of at least ODO1, IGS1 and PAL1. This Petunia hybrida (Petunia) protein is MYB-like transcription factor EOBI.